The chain runs to 164 residues: Transcription elongation factor GreA (164 aa).

The protein belongs to the GreA/GreB family.

Functionally, necessary for efficient RNA polymerase transcription elongation past template-encoded arresting sites. The arresting sites in DNA have the property of trapping a certain fraction of elongating RNA polymerases that pass through, resulting in locked ternary complexes. Cleavage of the nascent transcript by cleavage factors such as GreA or GreB allows the resumption of elongation from the new 3'terminus. GreA releases sequences of 2 to 3 nucleotides. The polypeptide is Transcription elongation factor GreA (Helicobacter acinonychis (strain Sheeba)).